Here is a 1319-residue protein sequence, read N- to C-terminus: DNA-directed RNA polymerase subunit beta' (1319 aa).

Zn(2+)-binding residues include Cys-60, Cys-62, Cys-75, and Cys-78. Mg(2+) contacts are provided by Asp-535, Asp-537, and Asp-539. Cys-890, Cys-971, Cys-978, and Cys-981 together coordinate Zn(2+).

Belongs to the RNA polymerase beta' chain family. As to quaternary structure, the RNAP catalytic core consists of 2 alpha, 1 beta, 1 beta' and 1 omega subunit. When a sigma factor is associated with the core the holoenzyme is formed, which can initiate transcription. Mg(2+) is required as a cofactor. Requires Zn(2+) as cofactor.

The enzyme catalyses RNA(n) + a ribonucleoside 5'-triphosphate = RNA(n+1) + diphosphate. DNA-dependent RNA polymerase catalyzes the transcription of DNA into RNA using the four ribonucleoside triphosphates as substrates. The protein is DNA-directed RNA polymerase subunit beta' of Mycobacteroides abscessus (strain ATCC 19977 / DSM 44196 / CCUG 20993 / CIP 104536 / JCM 13569 / NCTC 13031 / TMC 1543 / L948) (Mycobacterium abscessus).